The primary structure comprises 680 residues: Methionine--tRNA ligase (680 aa).

A 'HIGH' region motif is present at residues 15–25 (PYANGPVHIGH). 4 residues coordinate Zn(2+): Cys147, Cys150, Cys160, and Cys163. The 'KMSKS' region motif lies at 332–336 (KISTS). Residue Thr335 participates in ATP binding. Residues 579-680 (DFLKLDIRVG…AEVAAGSQVK (102 aa)) enclose the tRNA-binding domain.

Belongs to the class-I aminoacyl-tRNA synthetase family. MetG type 1 subfamily. As to quaternary structure, homodimer. Zn(2+) is required as a cofactor.

The protein localises to the cytoplasm. It catalyses the reaction tRNA(Met) + L-methionine + ATP = L-methionyl-tRNA(Met) + AMP + diphosphate. Functionally, is required not only for elongation of protein synthesis but also for the initiation of all mRNA translation through initiator tRNA(fMet) aminoacylation. The polypeptide is Methionine--tRNA ligase (Porphyromonas gingivalis (strain ATCC BAA-308 / W83)).